We begin with the raw amino-acid sequence, 384 residues long: uncharacterized protein (384 aa).

Disordered regions lie at residues 133-257 and 297-368; these read RQNS…TNQD and ERTP…STAT. Residues 143–157 show a composition bias toward low complexity; the sequence is PSTSSEPEPQPSTSS. Over residues 302–315 the composition is skewed to acidic residues; the sequence is DQTDITDDSADWSE. The segment covering 316 to 342 has biased composition (basic and acidic residues); it reads GETRRPSHSEVGERRLSRENNSEDPNR. Over residues 343 to 363 the composition is skewed to basic residues; it reads SRSRSRSRERRRRRPRVRPGR.

This is an uncharacterized protein from Gallid herpesvirus 2 (strain Chicken/Md5/ATCC VR-987) (GaHV-2).